Here is a 517-residue protein sequence, read N- to C-terminus: Recombining binding protein suppressor of hairless-like protein (517 aa).

Basic and acidic residues predominate over residues 26 to 37 (EMQLQSEADRRS). A disordered region spans residues 26 to 48 (EMQLQSEADRRSLPGTWTRSSPE). DNA-binding stretches follow at residues 78-88 (QKSYGNEKRFF), 193-198 (SKPSQK), and 220-225 (RLRSQT). An IPT/TIG domain is found at 387–512 (LISTLELSGG…HQEFTRTNFH (126 aa)).

The protein belongs to the Su(H) family. Interacts weakly with EBNA2. Does not interact with any Notch proteins.

It is found in the nucleus. In terms of biological role, putative transcription factor, which cooperates with EBNA2 to activate transcription. This Homo sapiens (Human) protein is Recombining binding protein suppressor of hairless-like protein (RBPJL).